Consider the following 464-residue polypeptide: Integrator complex subunit 12 (464 aa).

The interval 42 to 98 (GNDSVYRPQPKEVEQPKAMLSKVKPETKASSSTPSSSILSKPLASEKVKKEAEKRTA) is disordered. Residues 69–84 (KASSSTPSSSILSKPL) show a composition bias toward low complexity. The span at 85–98 (ASEKVKKEAEKRTA) shows a compositional bias: basic and acidic residues. Residues 156–212 (GLACVVCRQMTVFSGNQLVECQECHNLYHQDCHRPQVTDKDVNDPRLVWYCARCTRQ) form a PHD-type zinc finger. Disordered regions lie at residues 216-252 (MAQK…LKSK) and 312-445 (TNSQ…SQLN). Positions 227-239 (PAPSAVSAVTPVA) are enriched in low complexity. Residues 312-329 (TNSQATSGKPPSLSSVQK) are compositionally biased toward polar residues. The span at 339-371 (SKAGSVSKSGSGGSSSTIPLKPLPPLILGKTGL) shows a compositional bias: low complexity. The segment covering 372 to 382 (SRSMSSDNVSK) has biased composition (polar residues). Positions 384 to 421 (GLPSPNPSSSGSVSSLSSQLGSNNGSSNTAGSNVNSSN) are enriched in low complexity. Positions 428–445 (SMQQSGAKGPTSQESQLN) are enriched in polar residues.

The protein belongs to the Integrator subunit 12 family. In terms of assembly, component of the Integrator complex, composed of core subunits INTS1, INTS2, INTS3, INTS4, INTS5, INTS6, INTS7, INTS8, INTS9/RC74, INTS10, INTS11/CPSF3L, INTS12, INTS13, INTS14 and INTS15. The core complex associates with protein phosphatase 2A subunits PPP2CA and PPP2R1A, to form the Integrator-PP2A (INTAC) complex.

The protein localises to the nucleus. Component of the integrator complex, a multiprotein complex that terminates RNA polymerase II (Pol II) transcription in the promoter-proximal region of genes. The integrator complex provides a quality checkpoint during transcription elongation by driving premature transcription termination of transcripts that are unfavorably configured for transcriptional elongation: the complex terminates transcription by (1) catalyzing dephosphorylation of the C-terminal domain (CTD) of Pol II subunit POLR2A/RPB1 and SUPT5H/SPT5, (2) degrading the exiting nascent RNA transcript via endonuclease activity and (3) promoting the release of Pol II from bound DNA. The integrator complex is also involved in terminating the synthesis of non-coding Pol II transcripts, such as enhancer RNAs (eRNAs), small nuclear RNAs (snRNAs), telomerase RNAs and long non-coding RNAs (lncRNAs). The chain is Integrator complex subunit 12 (ints12) from Xenopus laevis (African clawed frog).